An 85-amino-acid polypeptide reads, in one-letter code: Defensin-like protein 11 (85 aa).

Positions 1–29 (MGKTISFSAIILVFLLVSTGLMKQGDAQA) are cleaved as a signal peptide. Disulfide bonds link Cys32-Cys84, Cys44-Cys68, Cys54-Cys75, and Cys58-Cys77.

This sequence belongs to the DEFL family.

It is found in the secreted. The polypeptide is Defensin-like protein 11 (Arabidopsis thaliana (Mouse-ear cress)).